The sequence spans 253 residues: Retinoic acid early-inducible protein 1-gamma (253 aa).

The first 28 residues, 1–28, serve as a signal peptide directing secretion; that stretch reads MAKAAVTKRHHFMIQKLLILLSYGYTNG. Cysteine 37 and cysteine 56 are joined by a disulfide. N-linked (GlcNAc...) asparagine glycosylation is found at asparagine 38, asparagine 70, asparagine 83, asparagine 143, and asparagine 156. A disulfide bridge links cysteine 90 with cysteine 190. A disordered region spans residues 198–230; the sequence is LKQSKEKPRSTSRSPSITQLTSTSPLPPPSHST. Residues 211 to 221 show a composition bias toward low complexity; sequence SPSITQLTSTS. Serine 227 carries the GPI-anchor amidated serine lipid modification. Residues 228 to 253 constitute a propeptide, removed in mature form; the sequence is HSTSKKGFISVGLIFISLLFAFAFAM.

This sequence belongs to the NKG2D ligand family. Glycosylated. Expressed predominantly in embryonic brain.

It localises to the cell membrane. Acts as a ligand for KLRK1. This chain is Retinoic acid early-inducible protein 1-gamma (Raet1c), found in Mus musculus (Mouse).